The sequence spans 311 residues: Ornithine carbamoyltransferase (311 aa).

Carbamoyl phosphate is bound by residues 59-62 (STRT), Q86, R110, and 137-140 (HPCQ). Residues N168, D228, and 232 to 233 (SM) each bind L-ornithine. Residues 267–268 (CL) and R295 contribute to the carbamoyl phosphate site.

It belongs to the aspartate/ornithine carbamoyltransferase superfamily. OTCase family.

Its subcellular location is the cytoplasm. The enzyme catalyses carbamoyl phosphate + L-ornithine = L-citrulline + phosphate + H(+). It functions in the pathway amino-acid biosynthesis; L-arginine biosynthesis; L-arginine from L-ornithine and carbamoyl phosphate: step 1/3. Reversibly catalyzes the transfer of the carbamoyl group from carbamoyl phosphate (CP) to the N(epsilon) atom of ornithine (ORN) to produce L-citrulline. This chain is Ornithine carbamoyltransferase, found in Caulobacter vibrioides (strain ATCC 19089 / CIP 103742 / CB 15) (Caulobacter crescentus).